Consider the following 372-residue polypeptide: Peptidyl-prolyl cis-trans isomerase D (372 aa).

A PPIase cyclophilin-type domain is found at 14–178 (YFDISIGGKS…KEALIVDCGE (165 aa)). TPR repeat units lie at residues 219 to 252 (AKAS…INEE), 271 to 304 (FSLN…GGVK), and 309 to 342 (AKAF…APND).

This sequence belongs to the cyclophilin-type PPIase family. PPIase D subfamily.

It is found in the cytoplasm. The catalysed reaction is [protein]-peptidylproline (omega=180) = [protein]-peptidylproline (omega=0). In terms of biological role, PPIases accelerate the folding of proteins. It catalyzes the cis-trans isomerization of proline imidic peptide bonds in oligopeptides. The chain is Peptidyl-prolyl cis-trans isomerase D (CPR6) from Gibberella zeae (strain ATCC MYA-4620 / CBS 123657 / FGSC 9075 / NRRL 31084 / PH-1) (Wheat head blight fungus).